Here is a 254-residue protein sequence, read N- to C-terminus: Arginine/ornithine transport ATP-binding protein AotP (254 aa).

An ABC transporter domain is found at Leu-4–Leu-249. Gly-36–Ser-43 is an ATP binding site.

This sequence belongs to the ABC transporter superfamily.

Its subcellular location is the cell inner membrane. Its function is as follows. Part of the arginine-inducible binding-protein-dependent transport system for arginine and ornithine. Probably responsible for energy coupling to the transport system. The protein is Arginine/ornithine transport ATP-binding protein AotP (aotP) of Pseudomonas aeruginosa (strain ATCC 15692 / DSM 22644 / CIP 104116 / JCM 14847 / LMG 12228 / 1C / PRS 101 / PAO1).